The chain runs to 366 residues: UDP-N-acetylglucosamine--N-acetylmuramyl-(pentapeptide) pyrophosphoryl-undecaprenol N-acetylglucosamine transferase (366 aa).

UDP-N-acetyl-alpha-D-glucosamine is bound by residues 15–17 (TGG), Asn127, Arg175, Ser201, Ile255, and Gln300.

Belongs to the glycosyltransferase 28 family. MurG subfamily.

It is found in the cell inner membrane. The catalysed reaction is di-trans,octa-cis-undecaprenyl diphospho-N-acetyl-alpha-D-muramoyl-L-alanyl-D-glutamyl-meso-2,6-diaminopimeloyl-D-alanyl-D-alanine + UDP-N-acetyl-alpha-D-glucosamine = di-trans,octa-cis-undecaprenyl diphospho-[N-acetyl-alpha-D-glucosaminyl-(1-&gt;4)]-N-acetyl-alpha-D-muramoyl-L-alanyl-D-glutamyl-meso-2,6-diaminopimeloyl-D-alanyl-D-alanine + UDP + H(+). Its pathway is cell wall biogenesis; peptidoglycan biosynthesis. Its function is as follows. Cell wall formation. Catalyzes the transfer of a GlcNAc subunit on undecaprenyl-pyrophosphoryl-MurNAc-pentapeptide (lipid intermediate I) to form undecaprenyl-pyrophosphoryl-MurNAc-(pentapeptide)GlcNAc (lipid intermediate II). This is UDP-N-acetylglucosamine--N-acetylmuramyl-(pentapeptide) pyrophosphoryl-undecaprenol N-acetylglucosamine transferase from Thiobacillus denitrificans (strain ATCC 25259 / T1).